The following is a 221-amino-acid chain: TVDFASESANERETQKEILDKHNALRRSVRPTARNMLQMEWNFNAAQNATRWADRCSFAHSPQHLRTVGELKCGENLFMSSHPFPWTRVIQSWYDENKNFKYGVGANPPNAVIGHYTQIVWYKSYLLGCAAARCPSSSYNYYYVCHYCPAGNIIGKIATPYKSGPPCGDCPSACVNGLCTNPCKHVDRYSNCNSLVQQISCQSNNMNTDCPASCFCHNEIK.

The 129-residue stretch at 19 to 147 (LDKHNALRRS…SYNYYYVCHY (129 aa)) folds into the SCP domain. N-linked (GlcNAc...) asparagine glycosylation occurs at Asn48. 8 disulfides stabilise this stretch: Cys56–Cys134, Cys73–Cys148, Cys129–Cys145, Cys167–Cys174, Cys170–Cys179, Cys183–Cys216, Cys192–Cys210, and Cys201–Cys214. In terms of domain architecture, ShKT spans 183–216 (CKHVDRYSNCNSLVQQISCQSNNMNTDCPASCFC).

In terms of assembly, forms a stable, non-covalent complex with SSP-2.

It localises to the secreted. The sequence is that of Serotriflin from Protobothrops flavoviridis (Habu).